Reading from the N-terminus, the 128-residue chain is Small ribosomal subunit protein uS11 (128 aa).

Belongs to the universal ribosomal protein uS11 family. Part of the 30S ribosomal subunit. Interacts with proteins S7 and S18. Binds to IF-3.

In terms of biological role, located on the platform of the 30S subunit, it bridges several disparate RNA helices of the 16S rRNA. Forms part of the Shine-Dalgarno cleft in the 70S ribosome. The polypeptide is Small ribosomal subunit protein uS11 (Chloroherpeton thalassium (strain ATCC 35110 / GB-78)).